The chain runs to 380 residues: Cytochrome b (380 aa).

4 helical membrane-spanning segments follow: residues 34–54 (FGSLLGICLLTQILTGLLLAT), 78–99 (WLIRNLHANGASFFFICIYLHI), 114–134 (WNTGVILLLALMATAFVGYVL), and 179–199 (FFALHFLLPFMIAGLAFIHLT). 2 residues coordinate heme b: His84 and His98. Residues His183 and His197 each contribute to the heme b site. His202 serves as a coordination point for a ubiquinone. 4 helical membrane passes run 227-247 (LKDILGFIIMFLPLTTLALFS), 289-309 (LGGVLALAASVLVLFLTPLLH), 321-341 (LSQLLFWTLVANLLILTWVGS), and 348-368 (FIIIGQLASLTYFTILLLLFP).

This sequence belongs to the cytochrome b family. In terms of assembly, the cytochrome bc1 complex contains 11 subunits: 3 respiratory subunits (MT-CYB, CYC1 and UQCRFS1), 2 core proteins (UQCRC1 and UQCRC2) and 6 low-molecular weight proteins (UQCRH/QCR6, UQCRB/QCR7, UQCRQ/QCR8, UQCR10/QCR9, UQCR11/QCR10 and a cleavage product of UQCRFS1). This cytochrome bc1 complex then forms a dimer. Requires heme b as cofactor.

It localises to the mitochondrion inner membrane. Its function is as follows. Component of the ubiquinol-cytochrome c reductase complex (complex III or cytochrome b-c1 complex) that is part of the mitochondrial respiratory chain. The b-c1 complex mediates electron transfer from ubiquinol to cytochrome c. Contributes to the generation of a proton gradient across the mitochondrial membrane that is then used for ATP synthesis. This is Cytochrome b (MT-CYB) from Uria aalge (Common mure).